The following is a 352-amino-acid chain: Rhodopsin, freshwater form (352 aa).

Residues 1–36 (MNGTEGPNFYVPMSNVTGVVRSPFEYPQYYLAEPWA) are Extracellular-facing. Residues asparagine 2 and asparagine 15 are each glycosylated (N-linked (GlcNAc...) asparagine). Residues 37–61 (YSALAAYMFFLIIAGFPINFLTLYV) traverse the membrane as a helical segment. The Cytoplasmic portion of the chain corresponds to 62-73 (TIEHKKLRTPLN). Residues 74–98 (YILLNLAVADLFMVFGGFTTTMYTS) form a helical membrane-spanning segment. The Extracellular segment spans residues 99–113 (MHGYFVFGPTGCNIE). Cysteine 110 and cysteine 187 are joined by a disulfide. Residues 114 to 133 (GFFATLGGEIALWCLVVLAV) traverse the membrane as a helical segment. At 134 to 152 (ERWMVVCKPMSNFRFGENH) the chain is on the cytoplasmic side. A helical transmembrane segment spans residues 153–176 (AIMGVAFTWVMALACAAPPLFGWS). Residues 177–202 (RYIPEGMQCSCGMDHYAPNPETYNES) are Extracellular-facing. Asparagine 200 is a glycosylation site (N-linked (GlcNAc...) asparagine). Residues 203–230 (FVIYMFICHFTIPLTVISFCYGRLVCTV) form a helical membrane-spanning segment. Residues 231 to 252 (KEATAQQQESETTQRAEREVTR) lie on the Cytoplasmic side of the membrane. A helical membrane pass occupies residues 253 to 276 (MVIIMVISFLVCWVPYASVAWYIF). Residues 277-284 (THQGSSFG) are Extracellular-facing. Residues 285 to 309 (PIFMTIPAFFAKSSSLYNPLIYICM) traverse the membrane as a helical segment. Residue lysine 296 is modified to N6-(retinylidene)lysine. Residues 310 to 352 (NKQSRNCMITTLCCGKNPFEEEEGASTTASKTEASSVSSVSPA) lie on the Cytoplasmic side of the membrane. A lipid anchor (S-palmitoyl cysteine) is attached at cysteine 323. A disordered region spans residues 330–352 (EEEGASTTASKTEASSVSSVSPA). The segment covering 334–352 (ASTTASKTEASSVSSVSPA) has biased composition (low complexity).

It belongs to the G-protein coupled receptor 1 family. Opsin subfamily. In terms of processing, phosphorylated on some or all of the serine and threonine residues present in the C-terminal region. In terms of tissue distribution, rod shaped photoreceptor cells which mediates vision in dim light.

The protein resides in the membrane. In terms of biological role, visual pigments such as rhodopsin and porphyropsin are light-absorbing molecules that mediate vision. Rhodopsin consists of an apoprotein, opsin, covalently linked to 11-cis-retinal. This receptor is coupled to the activation of phospholipase C. Porphyropsin consists of opsin covalently linked to 11-cis 3,4-didehydroretinal. The protein is Rhodopsin, freshwater form of Anguilla anguilla (European freshwater eel).